Here is a 656-residue protein sequence, read N- to C-terminus: Exoribonuclease 2 (656 aa).

An RNB domain is found at 190 to 518; the sequence is RSDLTKTPFF…LNHRLIKSVL (329 aa). An S1 motif domain is found at 564 to 649; that stretch reads KWRYKAEIFD…ESGQLIGKLA (86 aa).

Belongs to the RNR ribonuclease family. RNase II subfamily.

Its subcellular location is the cytoplasm. It carries out the reaction Exonucleolytic cleavage in the 3'- to 5'-direction to yield nucleoside 5'-phosphates.. Functionally, involved in mRNA degradation. Hydrolyzes single-stranded polyribonucleotides processively in the 3' to 5' direction. The chain is Exoribonuclease 2 from Psychromonas ingrahamii (strain DSM 17664 / CCUG 51855 / 37).